Consider the following 54-residue polypeptide: Secreted virulence factor MC69 (54 aa).

The N-terminal stretch at 1–18 is a signal peptide; it reads MKFTLALLTTLCASLASA. C38 and C48 form a disulfide bridge.

This sequence belongs to the MC69 virulence factor family.

The protein resides in the secreted. Functionally, secreted protein required for appressorial penetration of intact host epidermal cells and for pathogenicity. The sequence is that of Secreted virulence factor MC69 from Colletotrichum orbiculare (strain 104-T / ATCC 96160 / CBS 514.97 / LARS 414 / MAFF 240422) (Cucumber anthracnose fungus).